Here is a 265-residue protein sequence, read N- to C-terminus: Apolipoprotein A-I (265 aa).

The signal sequence occupies residues Met-1–Ala-18. 2 consecutive repeat copies span residues Leu-67–Gly-88 and Pro-89–Asn-110. Residues Leu-67 to Ala-265 are 10 X approximate tandem repeats. Residues Lys-111–Gln-121 form a 3; half-length repeat. Repeat copies occupy residues Pro-122–Glu-143, Pro-144–Thr-165, Pro-166–Ala-187, Pro-188–Ser-209, and Ala-210–Lys-231. The residue at position 193 (Met-193) is a Methionine sulfoxide. A 9; half-length repeat occupies Pro-232–Met-242. Residues Met-242 and Met-244 each carry the methionine sulfoxide modification. The stretch at Pro-243–Ala-265 is repeat 10.

The protein belongs to the apolipoprotein A1/A4/E family. Homodimer. Interacts with APOA1BP and CLU. Component of a sperm activating protein complex (SPAP), consisting of APOA1, an immunoglobulin heavy chain, an immunoglobulin light chain and albumin. Interacts with NDRG1. Interacts with SCGB3A2. Interacts with NAXE and YJEFN3. In terms of processing, glycosylated. Post-translationally, palmitoylated. Phosphorylation sites are present in the extracellular medium. In terms of tissue distribution, major protein of plasma HDL, also found in chylomicrons.

It localises to the secreted. Its function is as follows. Participates in the reverse transport of cholesterol from tissues to the liver for excretion by promoting cholesterol efflux from tissues and by acting as a cofactor for the lecithin cholesterol acyltransferase (LCAT). As part of the SPAP complex, activates spermatozoa motility. The sequence is that of Apolipoprotein A-I (APOA1) from Tupaia belangeri (Common tree shrew).